Here is a 96-residue protein sequence, read N- to C-terminus: Large ribosomal subunit protein bL27 (96 aa).

A propeptide spanning residues 1–9 (MLRLDLQFF) is cleaved from the precursor. The interval 14–36 (GVGSTKNGRDSQSKRLGAKRADG) is disordered.

The protein belongs to the bacterial ribosomal protein bL27 family. Post-translationally, the N-terminus is cleaved by ribosomal processing cysteine protease Prp.

The protein is Large ribosomal subunit protein bL27 of Bacillus anthracis (strain A0248).